Reading from the N-terminus, the 247-residue chain is Adenosylcobinamide-GDP ribazoletransferase (247 aa).

The next 5 helical transmembrane spans lie at 34-54 (IVMF…IFIL), 59-79 (CGIP…TGGF), 113-133 (GGLA…ELAL), 138-158 (MLAA…LLMY), and 194-214 (VLLL…AIFI).

This sequence belongs to the CobS family. The cofactor is Mg(2+).

It is found in the cell inner membrane. The enzyme catalyses alpha-ribazole + adenosylcob(III)inamide-GDP = adenosylcob(III)alamin + GMP + H(+). It carries out the reaction alpha-ribazole 5'-phosphate + adenosylcob(III)inamide-GDP = adenosylcob(III)alamin 5'-phosphate + GMP + H(+). It functions in the pathway cofactor biosynthesis; adenosylcobalamin biosynthesis; adenosylcobalamin from cob(II)yrinate a,c-diamide: step 7/7. Joins adenosylcobinamide-GDP and alpha-ribazole to generate adenosylcobalamin (Ado-cobalamin). Also synthesizes adenosylcobalamin 5'-phosphate from adenosylcobinamide-GDP and alpha-ribazole 5'-phosphate. The chain is Adenosylcobinamide-GDP ribazoletransferase from Salmonella typhi.